The primary structure comprises 227 residues: UPF0173 metal-dependent hydrolase Cmaq_1073 (227 aa).

It belongs to the UPF0173 family.

The protein is UPF0173 metal-dependent hydrolase Cmaq_1073 of Caldivirga maquilingensis (strain ATCC 700844 / DSM 13496 / JCM 10307 / IC-167).